A 188-amino-acid chain; its full sequence is Large ribosomal subunit protein uL5 (188 aa).

Belongs to the universal ribosomal protein uL5 family. Part of the 50S ribosomal subunit; contacts the 5S rRNA and probably tRNA. Forms a bridge to the 30S subunit in the 70S ribosome.

In terms of biological role, this is one of the proteins that bind and probably mediate the attachment of the 5S RNA into the large ribosomal subunit, where it forms part of the central protuberance. In the 70S ribosome it contacts protein S13 of the 30S subunit (bridge B1b), connecting the 2 subunits; this bridge is implicated in subunit movement. May contact the P site tRNA; the 5S rRNA and some of its associated proteins might help stabilize positioning of ribosome-bound tRNAs. The chain is Large ribosomal subunit protein uL5 from Pyrococcus horikoshii (strain ATCC 700860 / DSM 12428 / JCM 9974 / NBRC 100139 / OT-3).